The sequence spans 218 residues: MTTPNGMPDNPGDPENTDPEATSADRAEQAAEEAAARQAEESPFGQASEEEISPELEAEINDLLSDVDPDLDGDGEVSAVETQLAERTEDLQRVTAEYANYRRRTERERQGIIDTARAGVVTQLLPLLDDLDLAEQHGDLNEGPLKSLSDKLINILGGLKVESFGEIGEAFDPEIHEAVQDLSQGDVKVLGTVLRKGYRLGDRVIRTAMVLIGDPEES.

The disordered stretch occupies residues 1–75 (MTTPNGMPDN…DVDPDLDGDG (75 aa)). Residues 23–40 (SADRAEQAAEEAAARQAE) show a composition bias toward basic and acidic residues. The segment covering 48–75 (SEEEISPELEAEINDLLSDVDPDLDGDG) has biased composition (acidic residues).

The protein belongs to the GrpE family. In terms of assembly, homodimer.

It is found in the cytoplasm. In terms of biological role, participates actively in the response to hyperosmotic and heat shock by preventing the aggregation of stress-denatured proteins, in association with DnaK and GrpE. It is the nucleotide exchange factor for DnaK and may function as a thermosensor. Unfolded proteins bind initially to DnaJ; upon interaction with the DnaJ-bound protein, DnaK hydrolyzes its bound ATP, resulting in the formation of a stable complex. GrpE releases ADP from DnaK; ATP binding to DnaK triggers the release of the substrate protein, thus completing the reaction cycle. Several rounds of ATP-dependent interactions between DnaJ, DnaK and GrpE are required for fully efficient folding. This is Protein GrpE from Corynebacterium glutamicum (strain ATCC 13032 / DSM 20300 / JCM 1318 / BCRC 11384 / CCUG 27702 / LMG 3730 / NBRC 12168 / NCIMB 10025 / NRRL B-2784 / 534).